The primary structure comprises 514 residues: Prolyl 3,4-dihydroxylase OGFOD1 (514 aa).

One can recognise a Fe2OG dioxygenase domain in the interval 114 to 221 (GAVDCSCNIY…RVSISGWFHT (108 aa)). Fe cation is bound by residues His-132 and Asp-134. Tyr-146 is a binding site for 2-oxoglutarate. His-200 serves as a coordination point for Fe cation. Residue Arg-212 participates in 2-oxoglutarate binding.

This sequence belongs to the TPA1 family. In terms of assembly, monomer and homodimer. Requires Fe(2+) as cofactor. The cofactor is L-ascorbate.

The enzyme catalyses [ribosomal protein uS12]-L-proline + 2-oxoglutarate + O2 = [ribosomal protein uS12]-(3S)-3-hydroxy-L-proline + succinate + CO2. It catalyses the reaction [ribosomal protein uS12]-(3S)-3-hydroxy-L-proline + 2-oxoglutarate + O2 = [ribosomal protein uS12]-(3S)-3,4-dihydroxy-L-proline + succinate + CO2. Functionally, prolyl 3,4-dihydroxylase that catalyzes 3,4-dihydroxylation of 'Pro-61' of small ribosomal subunit uS12 (RPS23), thereby regulating protein translation termination efficiency. This is Prolyl 3,4-dihydroxylase OGFOD1 (Ogd) from Ostreococcus tauri.